Reading from the N-terminus, the 136-residue chain is Transcription antitermination protein NusB (136 aa).

The protein belongs to the NusB family.

Its function is as follows. Involved in transcription antitermination. Required for transcription of ribosomal RNA (rRNA) genes. Binds specifically to the boxA antiterminator sequence of the ribosomal RNA (rrn) operons. This Pseudarthrobacter chlorophenolicus (strain ATCC 700700 / DSM 12829 / CIP 107037 / JCM 12360 / KCTC 9906 / NCIMB 13794 / A6) (Arthrobacter chlorophenolicus) protein is Transcription antitermination protein NusB.